The primary structure comprises 253 residues: uncharacterized protein (253 aa).

The segment covering 1-14 has biased composition (low complexity); that stretch reads MKVPILSRLRSLSS. Disordered stretches follow at residues 1 to 192 and 212 to 253; these read MKVP…PKSS and PETV…AIQL. 2 stretches are compositionally biased toward basic and acidic residues: residues 17–30 and 45–60; these read RNNEEKNVDMEHQV and KSDKNNKHDKHDKSGE. Low complexity-rich tracts occupy residues 63 to 104 and 111 to 154; these read PSTP…GSDS and KTLS…QTPR. The segment covering 215–235 has biased composition (polar residues); it reads VVTSTPRQQSRPPSAQNTPNF. Residues 236 to 253 are compositionally biased toward low complexity; sequence TSQGGSRSTSRRQSAIQL.

This is an uncharacterized protein from Dictyostelium discoideum (Social amoeba).